Reading from the N-terminus, the 403-residue chain is MLQILYLAQDLADPAVRRRTLTLVAGGARVTLAGFRRGDNPLAAIDGVEPIELGTTADGRFAQRIGAVARACLSLQRQLGHVRKPDVIIARNLEMLAVARRAVAFFGGTVPIVYECLDIHRLMLRKDIVGRMLRAAESQLGKDARLLITSSPAFIEHYFRPLSGIGAPPMLLENKVLEIDGTVERRTASPAKSPPPGAPWKIGWFGALRCRRSLALLAEFSRKMEGRFEIVLRGRPAYSEFDDFDGFVRNEPFMRFEGAYRNPEDLAEIYGEVHFTWAIDFFEEGQNSAWLLPNRLYEGCRHGRIPIAMKGTETARFLSVRSIGLVLEGADVESLATVLGPLTPNCYADAAERISRCNPGSWVFDRTDCEALVRQLATLTLQAPQTVPVVAMAGSSHKEGGFL.

It localises to the cytoplasm. The protein operates within glycan metabolism; exopolysaccharide biosynthesis. Functionally, essential for succinoglycan (EPS I) synthesis and nodule infection. Glycosyltransferase needed for the addition of the third sugar (glucose), catalyzes the formation of a beta-1,4 linkage between the second and third sugars. The polypeptide is Succinoglycan biosynthesis protein ExoL (exoL) (Rhizobium meliloti (strain 1021) (Ensifer meliloti)).